We begin with the raw amino-acid sequence, 189 residues long: uncharacterized protein (189 aa).

5 helical membrane passes run 4–21 (AISTVLYVLIPFLVFLFR), 34–56 (AFYPFHLFLPMIVVFITGIPLIL), 79–101 (LLVIDTMLFQIMLLQPFITLIYS), 122–144 (RILSSLFAFVIAGIALPEIVLLN), and 148–170 (ILHVDYLFFVHLIASSVFANLLV).

Its subcellular location is the cell membrane. This is an uncharacterized protein from Archaeoglobus fulgidus (strain ATCC 49558 / DSM 4304 / JCM 9628 / NBRC 100126 / VC-16).